A 308-amino-acid chain; its full sequence is Glycerol-3-phosphate dehydrogenase [NAD(P)+] (308 aa).

The NADPH site is built by Trp-13, Arg-33, and Lys-81. Sn-glycerol 3-phosphate contacts are provided by Lys-81 and Gly-109. Ala-113 is a binding site for NADPH. Positions 163, 216, 226, 227, and 228 each coordinate sn-glycerol 3-phosphate. The active-site Proton acceptor is the Lys-163. Arg-227 contributes to the NADPH binding site. Residue Glu-253 participates in NADPH binding.

The protein belongs to the NAD-dependent glycerol-3-phosphate dehydrogenase family.

Its subcellular location is the cytoplasm. It carries out the reaction sn-glycerol 3-phosphate + NAD(+) = dihydroxyacetone phosphate + NADH + H(+). The enzyme catalyses sn-glycerol 3-phosphate + NADP(+) = dihydroxyacetone phosphate + NADPH + H(+). The protein operates within membrane lipid metabolism; glycerophospholipid metabolism. In terms of biological role, catalyzes the reduction of the glycolytic intermediate dihydroxyacetone phosphate (DHAP) to sn-glycerol 3-phosphate (G3P), the key precursor for phospholipid synthesis. This is Glycerol-3-phosphate dehydrogenase [NAD(P)+] from Thermosynechococcus vestitus (strain NIES-2133 / IAM M-273 / BP-1).